Reading from the N-terminus, the 157-residue chain is RNA-binding protein 3 (157 aa).

The RRM domain maps to 6–84 (GKLFVGGLNF…RQIRVDHAGK (79 aa)). R47 carries the omega-N-methylarginine modification. Residues 81–157 (HAGKSARGTR…GGNYRDNYDN (77 aa)) are disordered. R105 carries the post-translational modification Asymmetric dimethylarginine; alternate. A Dimethylated arginine; in A2780 ovarian carcinoma cell line modification is found at R105. At R105 the chain carries Omega-N-methylarginine; alternate. Positions 105–114 (RGGGDQGYGS) are enriched in gly residues. 2 positions are modified to omega-N-methylarginine: R121 and R131. Position 147 is a phosphoserine (S147). Phosphotyrosine is present on Y155.

As to quaternary structure, interacts with RPL4. Associates with the 60S ribosomal subunits in an RNA-independent manner. Associates with ribosomes. In terms of processing, arg-105 is dimethylated, probably to asymmetric dimethylarginine. Phosphorylated.

It localises to the nucleus. The protein resides in the cytoplasm. Its subcellular location is the cell projection. The protein localises to the dendrite. In terms of biological role, cold-inducible mRNA binding protein that enhances global protein synthesis at both physiological and mild hypothermic temperatures. Reduces the relative abundance of microRNAs, when overexpressed. Enhances phosphorylation of translation initiation factors and active polysome formation. The chain is RNA-binding protein 3 (RBM3) from Homo sapiens (Human).